The following is a 1124-amino-acid chain: Phytochrome A1 (1124 aa).

The span at 1–14 (MSSSRPSQSSTTSA) shows a compositional bias: low complexity. A disordered region spans residues 1–20 (MSSSRPSQSSTTSARSKHSA). A GAF domain is found at 218 to 401 (SMERLCDTMV…VFAIHVNKEL (184 aa)). Cysteine 323 is a binding site for phytochromobilin. Positions 617 to 687 (VTAEMVRLIE…KMLELALQGK (71 aa)) constitute a PAS 1 domain. The 57-residue stretch at 690–746 (RNVEFEIKTHGPSGDSSPISLIVNACASRDVGDSVVGVCFIAQDITGQKNIMDKFTR) folds into the PAC domain. The 75-residue stretch at 747–821 (IEGDYRAIIQ…KNQEAFVNFG (75 aa)) folds into the PAS 2 domain. Residues 901–1118 (YIRRQIRNPL…TFIISVELAV (218 aa)) enclose the Histidine kinase domain.

Belongs to the phytochrome family. Homodimer. In terms of processing, contains one covalently linked phytochromobilin chromophore.

Its function is as follows. Regulatory photoreceptor which exists in two forms that are reversibly interconvertible by light: the Pr form that absorbs maximally in the red region of the spectrum and the Pfr form that absorbs maximally in the far-red region. Photoconversion of Pr to Pfr induces an array of morphogenic responses, whereas reconversion of Pfr to Pr cancels the induction of those responses. Pfr controls the expression of a number of nuclear genes including those encoding the small subunit of ribulose-bisphosphate carboxylase, chlorophyll A/B binding protein, protochlorophyllide reductase, rRNA, etc. It also controls the expression of its own gene(s) in a negative feedback fashion. This chain is Phytochrome A1 (PHYA1), found in Nicotiana tabacum (Common tobacco).